A 397-amino-acid chain; its full sequence is Multidrug resistance protein MdtH (397 aa).

Transmembrane regions (helical) follow at residues 11–31 (WFLA…MPMI), 32–52 (SLRF…ALGL), 71–91 (FGAR…FASL), 94–114 (AQSG…GCLF), 137–157 (LLMM…SWLL), 163–183 (YVCL…LLIL), 211–231 (LVLI…IFPI), 242–262 (AVGW…YPLA), 291–311 (FANT…GIVI), 340–360 (LALG…YAML), and 366–386 (LPWL…VNCF).

The protein belongs to the major facilitator superfamily. DHA1 family. MdtH (TC 2.A.1.2.21) subfamily.

The protein localises to the cell inner membrane. This Aeromonas hydrophila subsp. hydrophila (strain ATCC 7966 / DSM 30187 / BCRC 13018 / CCUG 14551 / JCM 1027 / KCTC 2358 / NCIMB 9240 / NCTC 8049) protein is Multidrug resistance protein MdtH.